The following is a 90-amino-acid chain: Antitoxin epsilon (90 aa).

It belongs to the epsilon antitoxin family. In terms of assembly, in the presence of the zeta toxin, forms an inactive PezA(2)PezT(2) heterotetramer. The heterotetramer is still able to bind the zeta toxin substrate UNAG.

Functionally, antitoxin component of a type II toxin-antitoxin (TA) system. Neutralizes the toxic effect of cognate zeta toxin. Part of a postsegregational killing (PSK) system involved in the killing of plasmid-free cells. Continuous synthesis of the epsilon antitoxin is required to counteract the zeta toxin. The sequence is that of Antitoxin epsilon from Streptococcus pyogenes.